A 184-amino-acid polypeptide reads, in one-letter code: Translation initiation factor IF-3 (184 aa).

It belongs to the IF-3 family. As to quaternary structure, monomer.

The protein localises to the cytoplasm. In terms of biological role, IF-3 binds to the 30S ribosomal subunit and shifts the equilibrium between 70S ribosomes and their 50S and 30S subunits in favor of the free subunits, thus enhancing the availability of 30S subunits on which protein synthesis initiation begins. The sequence is that of Translation initiation factor IF-3 from Hamiltonella defensa subsp. Acyrthosiphon pisum (strain 5AT).